Consider the following 821-residue polypeptide: DNA ligase (821 aa).

NAD(+) is bound by residues Asp-33–Asp-37, Ser-82–Leu-83, and Glu-113. The active-site N6-AMP-lysine intermediate is the Lys-115. The NAD(+) site is built by Arg-136, Glu-173, Lys-290, and Lys-314. Zn(2+)-binding residues include Cys-408, Cys-411, Cys-426, and Cys-432. The BRCT domain occupies Ile-741–Glu-821.

This sequence belongs to the NAD-dependent DNA ligase family. LigA subfamily. Mg(2+) serves as cofactor. Mn(2+) is required as a cofactor.

The enzyme catalyses NAD(+) + (deoxyribonucleotide)n-3'-hydroxyl + 5'-phospho-(deoxyribonucleotide)m = (deoxyribonucleotide)n+m + AMP + beta-nicotinamide D-nucleotide.. In terms of biological role, DNA ligase that catalyzes the formation of phosphodiester linkages between 5'-phosphoryl and 3'-hydroxyl groups in double-stranded DNA using NAD as a coenzyme and as the energy source for the reaction. It is essential for DNA replication and repair of damaged DNA. This Stenotrophomonas maltophilia (strain R551-3) protein is DNA ligase.